A 132-amino-acid chain; its full sequence is Ribonuclease P protein component 2 (132 aa).

It belongs to the eukaryotic/archaeal RNase P protein component 2 family. Consists of a catalytic RNA component and at least 4-5 protein subunits.

The protein resides in the cytoplasm. The enzyme catalyses Endonucleolytic cleavage of RNA, removing 5'-extranucleotides from tRNA precursor.. Functionally, part of ribonuclease P, a protein complex that generates mature tRNA molecules by cleaving their 5'-ends. This Methanosarcina acetivorans (strain ATCC 35395 / DSM 2834 / JCM 12185 / C2A) protein is Ribonuclease P protein component 2.